Reading from the N-terminus, the 359-residue chain is Caffeic acid 3-O-methyltransferase (359 aa).

126–132 is a substrate binding site; that stretch reads MNQDKVL. A substrate binding region spans residues 158–176; it reads AFEYHGTDPRFNKVFNRGM. Gly204, Asp227, Asp247, Met248, and Lys261 together coordinate S-adenosyl-L-methionine. His265 acts as the Proton acceptor in catalysis.

Belongs to the class I-like SAM-binding methyltransferase superfamily. Cation-independent O-methyltransferase family. COMT subfamily. Homodimer. As to expression, fruit. Not expressed in leaf.

It carries out the reaction (E)-caffeate + S-adenosyl-L-methionine = (E)-ferulate + S-adenosyl-L-homocysteine + H(+). Its pathway is aromatic compound metabolism; phenylpropanoid biosynthesis. In terms of biological role, catalyzes the conversion of caffeic acid to ferulic acid and of 5-hydroxyferulic acid to sinapic acid. The resulting products may subsequently be converted to the corresponding alcohols that are incorporated into lignins. This Capsicum annuum (Capsicum pepper) protein is Caffeic acid 3-O-methyltransferase (COMT).